Here is a 355-residue protein sequence, read N- to C-terminus: MSGQPKRLMVMAGGTGGHVFPGLAVAHHLMAQGWQVRWLGTADRMEADLVPKHGIDIDFIRISGLRGKGVKALLAAPLRIFNAWRQARAIMKRFKPDVVLGMGGYVSGPGGLAAWSLGIPVVLHEQNGIAGLTNQWLAKIATTVMQAFPGAFPNAEVVGNPVRTDVLALPLPQVRLAGRDGPIRVLVVGGSQGARVLNQTMPQVAARLGDTVTIWHQSGKGAQLTVEQAYAGAGQPQHKVTEFIDDMAAAYAWADVVVCRSGALTVSEIAAAGLPAIFVPFQHKDRQQYWNALPLENAGAAKIFEQPQFTVEAVADTLAGWSREALLTMAERARAVSIPDATERVASEVSRVART.

UDP-N-acetyl-alpha-D-glucosamine contacts are provided by residues 15–17 (TGG), asparagine 127, arginine 163, serine 191, isoleucine 244, 263–268 (ALTVSE), and glutamine 288.

The protein belongs to the glycosyltransferase 28 family. MurG subfamily.

It is found in the cell inner membrane. The enzyme catalyses di-trans,octa-cis-undecaprenyl diphospho-N-acetyl-alpha-D-muramoyl-L-alanyl-D-glutamyl-meso-2,6-diaminopimeloyl-D-alanyl-D-alanine + UDP-N-acetyl-alpha-D-glucosamine = di-trans,octa-cis-undecaprenyl diphospho-[N-acetyl-alpha-D-glucosaminyl-(1-&gt;4)]-N-acetyl-alpha-D-muramoyl-L-alanyl-D-glutamyl-meso-2,6-diaminopimeloyl-D-alanyl-D-alanine + UDP + H(+). It participates in cell wall biogenesis; peptidoglycan biosynthesis. Its function is as follows. Cell wall formation. Catalyzes the transfer of a GlcNAc subunit on undecaprenyl-pyrophosphoryl-MurNAc-pentapeptide (lipid intermediate I) to form undecaprenyl-pyrophosphoryl-MurNAc-(pentapeptide)GlcNAc (lipid intermediate II). This is UDP-N-acetylglucosamine--N-acetylmuramyl-(pentapeptide) pyrophosphoryl-undecaprenol N-acetylglucosamine transferase from Salmonella paratyphi B (strain ATCC BAA-1250 / SPB7).